An 82-amino-acid polypeptide reads, in one-letter code: Cytochrome b559 subunit alpha (82 aa).

A helical transmembrane segment spans residues V22–F36. H24 serves as a coordination point for heme.

The protein belongs to the PsbE/PsbF family. Heterodimer of an alpha subunit and a beta subunit. PSII is composed of 1 copy each of membrane proteins PsbA, PsbB, PsbC, PsbD, PsbE, PsbF, PsbH, PsbI, PsbJ, PsbK, PsbL, PsbM, PsbT, PsbX, PsbY, PsbZ, Psb30/Ycf12, peripheral proteins PsbO, CyanoQ (PsbQ), PsbU, PsbV and a large number of cofactors. It forms dimeric complexes. The cofactor is heme b.

Its subcellular location is the cellular thylakoid membrane. Its function is as follows. This b-type cytochrome is tightly associated with the reaction center of photosystem II (PSII). PSII is a light-driven water:plastoquinone oxidoreductase that uses light energy to abstract electrons from H(2)O, generating O(2) and a proton gradient subsequently used for ATP formation. It consists of a core antenna complex that captures photons, and an electron transfer chain that converts photonic excitation into a charge separation. This Synechococcus sp. (strain CC9311) protein is Cytochrome b559 subunit alpha.